The sequence spans 202 residues: Putative 3-methyladenine DNA glycosylase (202 aa).

The protein belongs to the DNA glycosylase MPG family.

This Staphylococcus aureus (strain bovine RF122 / ET3-1) protein is Putative 3-methyladenine DNA glycosylase.